Reading from the N-terminus, the 280-residue chain is Acetylglutamate kinase (280 aa).

Substrate-binding positions include 57–58 (GG), Arg79, and Asn174.

This sequence belongs to the acetylglutamate kinase family. ArgB subfamily.

Its subcellular location is the cytoplasm. The enzyme catalyses N-acetyl-L-glutamate + ATP = N-acetyl-L-glutamyl 5-phosphate + ADP. It functions in the pathway amino-acid biosynthesis; L-arginine biosynthesis; N(2)-acetyl-L-ornithine from L-glutamate: step 2/4. Its function is as follows. Catalyzes the ATP-dependent phosphorylation of N-acetyl-L-glutamate. The sequence is that of Acetylglutamate kinase from Helicobacter hepaticus (strain ATCC 51449 / 3B1).